The following is a 445-amino-acid chain: MASLTPKDIVSELNRHIVGQDAAKRAVALALRTRWRRMQLPEEMRAEVAPKNILMIGPTGVGKTEIARRLAKLADAPFIKVEATKFTEVGYVGRDVESIIRDLMEVAIKLLRDKEIARVGSQADDAAEERILDALLPPARTDDSSANTDNSTRQIFRKKLREGELDDKEIDVDVASNPAGIDIMAPPGMEEMTSQLQQMFSKMGNNQQRKSQKLKVREAYRLIRDEEAARFVNEDELKVQAIDAVENSGIVFIDEIDKVAKRGEGGGTDVSREGVQRDLLPLIEGSTVSTKYGMVKTDHILFIASGAFHLSRPSDLIPELQGRLPIRVELSPLSPDDFQRILTEPKCSLTEQYKALLETEGLNLEITDDCIRRIAEVAWQVNERTENIGARRLHTVLEKLLEEISFDADSLATQYHDKPLVLDAEAVDRYLGELADDEDLSRYIL.

ATP-binding positions include V18, 60–65, D254, E319, and R391; that span reads GVGKTE.

Belongs to the ClpX chaperone family. HslU subfamily. In terms of assembly, a double ring-shaped homohexamer of HslV is capped on each side by a ring-shaped HslU homohexamer. The assembly of the HslU/HslV complex is dependent on binding of ATP.

It is found in the cytoplasm. In terms of biological role, ATPase subunit of a proteasome-like degradation complex; this subunit has chaperone activity. The binding of ATP and its subsequent hydrolysis by HslU are essential for unfolding of protein substrates subsequently hydrolyzed by HslV. HslU recognizes the N-terminal part of its protein substrates and unfolds these before they are guided to HslV for hydrolysis. The sequence is that of ATP-dependent protease ATPase subunit HslU from Alcanivorax borkumensis (strain ATCC 700651 / DSM 11573 / NCIMB 13689 / SK2).